The sequence spans 89 residues: Ubiquinol-cytochrome-c reductase complex assembly factor 3 (89 aa).

Residues 1–7 are Mitochondrial matrix-facing; it reads MEVARKA. A helical transmembrane segment spans residues 8 to 28; that stretch reads LVAVAVLGGGAGVGSILFALV. The mediates lipid-binding stretch occupies residues 23-80; that stretch reads ILFALVTPGELQKQSMLQEMPERDSRRRDEAVRTTELVMATLKDAAATKENVAWRRNW. Residues 29 to 89 lie on the Mitochondrial intermembrane side of the membrane; it reads TPGELQKQSM…WTVSGDGRSA (61 aa).

This sequence belongs to the UQCC3 family. Associates with the ubiquinol-cytochrome c reductase complex (mitochondrial respiratory chain complex III(CIII) or cytochrome b-c1 complex). Interacts with UQCC1. Forms a complex, named COMC, composed of UQCC1, UQCC2; UQCC3 and UQCC4; mediates MT-CYB hemylation and association with the first nuclear-encoded complex III subunit UQCRQ. In terms of processing, probably cleaved by OMA1 under mitochondrial stress conditions.

The protein resides in the mitochondrion inner membrane. Required for the assembly of the ubiquinol-cytochrome c reductase complex (mitochondrial respiratory chain complex III or cytochrome b-c1 complex), mediating cytochrome b recruitment and probably stabilization within the complex. Thereby, plays an important role in ATP production by mitochondria. Cardiolipin-binding protein, it may also control the cardiolipin composition of mitochondria membranes and their morphology. This chain is Ubiquinol-cytochrome-c reductase complex assembly factor 3, found in Mus musculus (Mouse).